The chain runs to 533 residues: L-aspartate oxidase (533 aa).

Residues 16-19 (SGAA), Lys38, 45-52 (ATFYAQGG), and Asp223 each bind FAD. The active-site Proton donor/acceptor is Arg290. Residues Glu375 and 391-392 (SL) contribute to the FAD site.

Belongs to the FAD-dependent oxidoreductase 2 family. NadB subfamily. Requires FAD as cofactor.

The protein resides in the cytoplasm. It carries out the reaction L-aspartate + O2 = iminosuccinate + H2O2. The protein operates within cofactor biosynthesis; NAD(+) biosynthesis; iminoaspartate from L-aspartate (oxidase route): step 1/1. Its function is as follows. Catalyzes the oxidation of L-aspartate to iminoaspartate, the first step in the de novo biosynthesis of NAD(+). In Yersinia pestis, this protein is L-aspartate oxidase (nadB).